An 874-amino-acid polypeptide reads, in one-letter code: MKTTAEIRQAFLDFFHSKGHQIVDSSSLVPENDPTLLFTNAGMNQFKDVFLGLDTRSYTRATTAQRCVRAGGKHNDLENVGYTARHHTFFEMLGNFSFGDYFKQDAIKFAWEFLTSPEWLGLPEEKLYVTVYETDDEAYGIWHKGVGVPENHIIRIGDNKGAPYASDNFWAMGDTGPCGPCTEIFYDHGEHVWGGLPGSEEEDGDRYIEVWNIVFMQFNRLADGTMEKLPKPSVDTGMGLERISAVIQHVNSNYDIDIFQKLIAKVAELTGEKDLTNKSLRVIADHIRSCAYLIADGVIPSNEGRGYVLRRIIRRAVRHGHLLGAKDTFFYKLVPVLIDVMATAGKDVKAKQANVEKLLRLEEEQFARTLERGLALLDEALINVKDGVLSGEVAFKLYDTYGFPLDLTADVCRERNIRIDEEGFEREMEVQRLRAQAASRFGVDYNNVIRVEGTTTFEGYTEAETQAKVTALFYEGKSVESISAGQSAVVILDDTPFYAESGGQIGDRGCLIATNMRFDVKDTQKYGQVFGHIGTLIQGTLNVGQTINAVVDTEHRTKTSLNHSATHLLHAALRQVLGTHVAQKGSLVSDTILRFDFAQPEAIRQEQLFEIECLVNQHIRANHLVVTEVMPIDEAKAKGAMALFGEKYGDVVRVVKMGEFSIELCGGIHVKRTGEIGLFKIVSESAIAAGVRRVEAVTGEAAINWLQQQQQILMQSADLLKSDANSLVEKIQQLQDKAKKTEKELQALKEKSAMKAGSDIAKSAVEINGVSVIVQQLENMDVKSLRVIVDDLKNQLGSAVIAFVTKTEDKVNLVVGVTTDLTSKVKAGELVNLMAQQVGGKGGGRPDMAMAGGSQPENISKALTVCNEWLHKNL.

Zn(2+)-binding residues include His-563, His-567, Cys-665, and His-669.

It belongs to the class-II aminoacyl-tRNA synthetase family. It depends on Zn(2+) as a cofactor.

It is found in the cytoplasm. It carries out the reaction tRNA(Ala) + L-alanine + ATP = L-alanyl-tRNA(Ala) + AMP + diphosphate. Functionally, catalyzes the attachment of alanine to tRNA(Ala) in a two-step reaction: alanine is first activated by ATP to form Ala-AMP and then transferred to the acceptor end of tRNA(Ala). Also edits incorrectly charged Ser-tRNA(Ala) and Gly-tRNA(Ala) via its editing domain. The polypeptide is Alanine--tRNA ligase (Histophilus somni (strain 129Pt) (Haemophilus somnus)).